A 1020-amino-acid polypeptide reads, in one-letter code: Probable beta-galactosidase B (1020 aa).

Residues 1-22 (MLISKTVLSGLALGASFVGVSA) form the signal peptide. An N-linked (GlcNAc...) asparagine glycan is attached at N25. Y90 is a binding site for substrate. An N-linked (GlcNAc...) asparagine glycan is attached at N111. Substrate-binding residues include N135, A136, and E137. N172 is a glycosylation site (N-linked (GlcNAc...) asparagine). Position 195 (N195) interacts with substrate. E196 (proton donor) is an active-site residue. N-linked (GlcNAc...) asparagine glycans are attached at residues N210 and N251. Residue Y264 coordinates substrate. A disulfide bond links C270 and C323. A glycan (N-linked (GlcNAc...) asparagine) is linked at N271. The active-site Nucleophile is the E307. A substrate-binding site is contributed by Y372. N410, N455, N549, N596, N625, N702, N747, N785, N819, N880, and N919 each carry an N-linked (GlcNAc...) asparagine glycan.

Belongs to the glycosyl hydrolase 35 family.

The protein localises to the secreted. The enzyme catalyses Hydrolysis of terminal non-reducing beta-D-galactose residues in beta-D-galactosides.. In terms of biological role, cleaves beta-linked terminal galactosyl residues from gangliosides, glycoproteins, and glycosaminoglycans. This chain is Probable beta-galactosidase B (lacB), found in Aspergillus flavus (strain ATCC 200026 / FGSC A1120 / IAM 13836 / NRRL 3357 / JCM 12722 / SRRC 167).